Reading from the N-terminus, the 468-residue chain is ATP synthase subunit beta (468 aa).

Gly155–Thr162 contributes to the ATP binding site.

The protein belongs to the ATPase alpha/beta chains family. As to quaternary structure, F-type ATPases have 2 components, CF(1) - the catalytic core - and CF(0) - the membrane proton channel. CF(1) has five subunits: alpha(3), beta(3), gamma(1), delta(1), epsilon(1). CF(0) has three main subunits: a(1), b(2) and c(9-12). The alpha and beta chains form an alternating ring which encloses part of the gamma chain. CF(1) is attached to CF(0) by a central stalk formed by the gamma and epsilon chains, while a peripheral stalk is formed by the delta and b chains.

It localises to the cell membrane. It carries out the reaction ATP + H2O + 4 H(+)(in) = ADP + phosphate + 5 H(+)(out). Functionally, produces ATP from ADP in the presence of a proton gradient across the membrane. The catalytic sites are hosted primarily by the beta subunits. The sequence is that of ATP synthase subunit beta from Streptococcus thermophilus (strain ATCC BAA-250 / LMG 18311).